The chain runs to 324 residues: MMSQQDLPTLFYSGKSNSAVPIISESELQTITAEPWLEISKKGLQLEGLNFDRQGQLFLLDVFEGNIFKVNPETKEIKQPFVSHKANPAAIKIHKDGRLFVCYLGDFKSTGGIFAATENGDNIQDIIEDLSTTYCIDDMVFDSKGGFYFTDFRGYSTNPLGGVYYVAPDFRTVTPIIQNISVANGIALSTDEKVLWVTETTANRLHRIALEDDGVTIQPFGATIPYYFTGHEGPDSCCIDRDDNLYVAMYGQGRVLVFNKRGYPIGQILIPGRDEGHMLRSTHPQFIPGTNQLIICANDIEMGGGSMLYTVNGFAKGHQSFQFQ.

Glu47, Ser109, Gly111, Asp129, Thr132, Tyr134, Asp137, Asn184, Asp235, and Ser236 together coordinate Ca(2+). The active-site Proton donor is Asp235.

The protein belongs to the SMP-30/CGR1 family. Ca(2+) is required as a cofactor.

The protein resides in the cytoplasm. Exhibits lactonase activity. Acts in cells with perturbed membrane integrity and is possibly related to the membrane homeostasis. This is Lactonase drp35 (drp35) from Staphylococcus aureus (strain bovine RF122 / ET3-1).